Reading from the N-terminus, the 1032-residue chain is Vacuolar membrane protease (1032 aa).

Residues 1–11 (MRFQNPFAFRP) are Cytoplasmic-facing. The helical transmembrane segment at 12–32 (GPVSFWTTVIYLALVIPLIYV) threads the bilayer. At 33-426 (HETVPPAPSD…AWAVFALRGL (394 aa)) the chain is on the vacuolar side. N-linked (GlcNAc...) asparagine glycosylation is found at Asn-50 and Asn-142. Zn(2+)-binding residues include His-207 and Asp-219. Glu-253 acts as the Proton acceptor in catalysis. The Zn(2+) site is built by Glu-254, Glu-279, and His-352. The chain crosses the membrane as a helical span at residues 427–447 (FAWSLTLLVATPLILVAITYI). The Cytoplasmic portion of the chain corresponds to 448-482 (LARKDKYYFFSRDIKMHHDINDDPVVLGGWKGFLR). The chain crosses the membrane as a helical span at residues 483–503 (FPFALVFAGALTIASTLLLAK). The Vacuolar portion of the chain corresponds to 504 to 511 (FNPLIIYS). Residues 512–532 (SPYAVWSMTLSIFYFSFWLIM) form a helical membrane-spanning segment. Residues 533–545 (RGASFIRPSALHR) lie on the Cytoplasmic side of the membrane. The chain crosses the membrane as a helical span at residues 546-566 (GYVLIWLFALGWGLQVVGAVA). The Vacuolar segment spans residues 567–573 (EDRLHIA). Residues 574 to 594 (ALYATVFLQSAVFLALFISLL) form a helical membrane-spanning segment. Topologically, residues 595–708 (EQFALLGKHD…WSGRLPSWTW (114 aa)) are cytoplasmic. Basic and acidic residues predominate over residues 616-631 (RDISSHGTDHESRPQP). The tract at residues 616-666 (RDISSHGTDHESRPQPEEEPAQPEGDEDESEDATETTPLRANEPGYGSSTR) is disordered. The span at 632-649 (EEEPAQPEGDEDESEDAT) shows a compositional bias: acidic residues. Residues 709-729 (IIQFLLLAPVPVILFGNLGLV) traverse the membrane as a helical segment. The Vacuolar segment spans residues 730–745 (AMSALQMTGTDGGSLL). A helical transmembrane segment spans residues 746 to 766 (VPVLTLGIVSIFLLLPLTPFI). Topologically, residues 767–773 (HRVSHHV) are cytoplasmic. Residues 774-794 (PMFLLCVFAGTFIYNLVAFPF) form a helical membrane-spanning segment. Residues 795–1032 (SDSHRFKFYF…LVEVRKTYKV (238 aa)) lie on the Vacuolar side of the membrane. Asn-812 and Asn-884 each carry an N-linked (GlcNAc...) asparagine glycan.

It belongs to the peptidase M28 family. Requires Zn(2+) as cofactor.

It is found in the vacuole membrane. Functionally, may be involved in vacuolar sorting and osmoregulation. The protein is Vacuolar membrane protease of Fusarium vanettenii (strain ATCC MYA-4622 / CBS 123669 / FGSC 9596 / NRRL 45880 / 77-13-4) (Fusarium solani subsp. pisi).